We begin with the raw amino-acid sequence, 203 residues long: Akirin-2 (203 aa).

Ser-18 and Ser-21 each carry phosphoserine. Positions 22 to 27 match the Nuclear localization signal motif; that stretch reads PKRRRC. Ser-57 is subject to Phosphoserine. An SYVS motif motif is present at residues 200-203; the sequence is SYVS.

Belongs to the akirin family. Homodimer. Interacts with IPO9; the interaction is direct. Associates with 20S and 26S proteasomes. Interacts with SMARCD1; promoting SWI/SNF complex recruitment. Interacts with NFKBIZ. Interacts with YWHAB. Polyubiquitinated. Polyubiquitination is dependent of UBR5 that extends pre-ubiquitinated AKIRIN2. As to expression, widely expressed. Most abundant in the lung, followed by the skeletal muscle, heart, liver, fat, thymus, lymph node, small intestine, kidney and spleen. In skeletal muscle, expressed at higher level in fast extensor digitorum longus (EDL) and longissimus lumborum (LL) muscles than in slow soleus (SOL) muscles.

It localises to the nucleus. It is found in the cytoplasm. Its subcellular location is the membrane. Molecular adapter that acts as a bridge between a variety of multiprotein complexes, and which is involved in embryonic development, immunity, myogenesis and brain development. Plays a key role in nuclear protein degradation by promoting import of proteasomes into the nucleus: directly binds to fully assembled 20S proteasomes at one end and to nuclear import receptor IPO9 at the other end, bridging them together and mediating the import of pre-assembled proteasome complexes through the nuclear pore. Involved in innate immunity by regulating the production of interleukin-6 (IL6) downstream of Toll-like receptor (TLR): acts by bridging the NF-kappa-B inhibitor NFKBIZ and the SWI/SNF complex, leading to promote induction of IL6. Also involved in adaptive immunity by promoting B-cell activation. Involved in brain development: required for the survival and proliferation of cerebral cortical progenitor cells. Involved in myogenesis: required for skeletal muscle formation and skeletal development, possibly by regulating expression of muscle differentiation factors. The sequence is that of Akirin-2 from Sus scrofa (Pig).